Consider the following 535-residue polypeptide: Bifunctional purine biosynthesis protein PurH (535 aa).

Residues 1-145 (MAQTALISVS…KNWKDVGVLT (145 aa)) form the MGS-like domain.

It belongs to the PurH family.

The enzyme catalyses (6R)-10-formyltetrahydrofolate + 5-amino-1-(5-phospho-beta-D-ribosyl)imidazole-4-carboxamide = 5-formamido-1-(5-phospho-D-ribosyl)imidazole-4-carboxamide + (6S)-5,6,7,8-tetrahydrofolate. The catalysed reaction is IMP + H2O = 5-formamido-1-(5-phospho-D-ribosyl)imidazole-4-carboxamide. The protein operates within purine metabolism; IMP biosynthesis via de novo pathway; 5-formamido-1-(5-phospho-D-ribosyl)imidazole-4-carboxamide from 5-amino-1-(5-phospho-D-ribosyl)imidazole-4-carboxamide (10-formyl THF route): step 1/1. It participates in purine metabolism; IMP biosynthesis via de novo pathway; IMP from 5-formamido-1-(5-phospho-D-ribosyl)imidazole-4-carboxamide: step 1/1. The polypeptide is Bifunctional purine biosynthesis protein PurH (Variovorax paradoxus (strain S110)).